The following is a 500-amino-acid chain: Plasma protease C1 inhibitor (500 aa).

An N-terminal signal peptide occupies residues 1-22 (MASRLTLLTLLLLLLAGDRASS). The span at 20 to 31 (ASSNPNATSSSS) shows a compositional bias: low complexity. The segment at 20 to 43 (ASSNPNATSSSSQDPESLQDRGEG) is disordered. N-linked (GlcNAc...) (complex) asparagine glycosylation occurs at Asn-25. Thr-47 and Thr-48 each carry an O-linked (GalNAc...) threonine glycan. Ser-64 carries an O-linked (GalNAc...) serine glycan. A disordered region spans residues 65 to 118 (LPTTNSTTNSATKITANTTDEPTTQPTTEPTTQPTIQPTQPTTQLPTDSPTQPT). A compositionally biased stretch (low complexity) spans 67–118 (TTNSTTNSATKITANTTDEPTTQPTTEPTTQPTIQPTQPTTQLPTDSPTQPT). An N-linked (GlcNAc...) asparagine glycan is attached at Asn-69. O-linked (GalNAc...) threonine glycosylation is present at Thr-71. The N-linked (GlcNAc...) asparagine glycan is linked to Asn-81. O-linked (GalNAc...) threonine glycans are attached at residues Thr-83, Thr-88, Thr-92, and Thr-96. 7 consecutive repeat copies span residues 85–88 (EPTT), 89–92 (QPTT), 93–96 (EPTT), 97–100 (QPTI), 101–104 (QPTQ), 105–108 (PTTQ), and 116–119 (QPTT). The segment at 85–119 (EPTTQPTTEPTTQPTIQPTQPTTQLPTDSPTQPTT) is 7 X 4 AA tandem repeats of [QE]-P-T-[TQ]. Cystine bridges form between Cys-123/Cys-428 and Cys-130/Cys-205. Residues Asn-238 and Asn-253 are each glycosylated (N-linked (GlcNAc...) (complex) asparagine). N-linked (GlcNAc...) asparagine; in variant TA glycosylation occurs at Asn-272. N-linked (GlcNAc...) (complex) asparagine glycosylation occurs at Asn-352.

The protein belongs to the serpin family. Interacts with MASP1. In terms of assembly, (Microbial infection) Binds to E.coli stcE which allows localization of SERPING1 to cell membranes thus protecting the bacteria against complement-mediated lysis. In terms of processing, highly glycosylated (49%) with N- and O-glycosylation. O-glycosylated with core 1 or possibly core 8 glycans. N-glycan heterogeneity at Asn-25: Hex5HexNAc4 (minor), dHex1Hex5HexNAc4 (minor), Hex6HexNAc5 (major) and dHex1Hex6HexNAc5 (minor). Post-translationally, cleaved by C1S in vitro. (Microbial infection) Can be proteolytically cleaved by E.coli stcE.

Its subcellular location is the secreted. In terms of biological role, serine protease inhibitor, which acrs as a regulator of the classical complement pathway. Forms a proteolytically inactive stoichiometric complex with the C1r or C1s proteases. May also regulate blood coagulation, fibrinolysis and the generation of kinins. Very efficient inhibitor of FXIIa. Inhibits chymotrypsin and kallikrein. In Homo sapiens (Human), this protein is Plasma protease C1 inhibitor (SERPING1).